Consider the following 330-residue polypeptide: Ketol-acid reductoisomerase (NADP(+)) (330 aa).

A KARI N-terminal Rossmann domain is found at 2–182 (VKVYYDADAN…GCTKAGVFET (181 aa)). NADP(+) contacts are provided by residues 25–28 (YGSQ), R48, S51, and 83–86 (DEIQ). H108 is an active-site residue. G134 serves as a coordination point for NADP(+). Positions 183–328 (SFREETETDL…ARLREMMPWL (146 aa)) constitute a KARI C-terminal knotted domain. Positions 191, 195, 227, and 231 each coordinate Mg(2+). S252 is a binding site for substrate.

Belongs to the ketol-acid reductoisomerase family. The cofactor is Mg(2+).

It carries out the reaction (2R)-2,3-dihydroxy-3-methylbutanoate + NADP(+) = (2S)-2-acetolactate + NADPH + H(+). The enzyme catalyses (2R,3R)-2,3-dihydroxy-3-methylpentanoate + NADP(+) = (S)-2-ethyl-2-hydroxy-3-oxobutanoate + NADPH + H(+). It participates in amino-acid biosynthesis; L-isoleucine biosynthesis; L-isoleucine from 2-oxobutanoate: step 2/4. Its pathway is amino-acid biosynthesis; L-valine biosynthesis; L-valine from pyruvate: step 2/4. Its function is as follows. Involved in the biosynthesis of branched-chain amino acids (BCAA). Catalyzes an alkyl-migration followed by a ketol-acid reduction of (S)-2-acetolactate (S2AL) to yield (R)-2,3-dihydroxy-isovalerate. In the isomerase reaction, S2AL is rearranged via a Mg-dependent methyl migration to produce 3-hydroxy-3-methyl-2-ketobutyrate (HMKB). In the reductase reaction, this 2-ketoacid undergoes a metal-dependent reduction by NADPH to yield (R)-2,3-dihydroxy-isovalerate. This is Ketol-acid reductoisomerase (NADP(+)) from Desulforamulus reducens (strain ATCC BAA-1160 / DSM 100696 / MI-1) (Desulfotomaculum reducens).